Here is a 251-residue protein sequence, read N- to C-terminus: Hydroxyacylglutathione hydrolase (251 aa).

Residues H53, H55, D57, H58, H110, D127, and H165 each coordinate Zn(2+).

It belongs to the metallo-beta-lactamase superfamily. Glyoxalase II family. As to quaternary structure, monomer. Requires Zn(2+) as cofactor.

It catalyses the reaction an S-(2-hydroxyacyl)glutathione + H2O = a 2-hydroxy carboxylate + glutathione + H(+). It functions in the pathway secondary metabolite metabolism; methylglyoxal degradation; (R)-lactate from methylglyoxal: step 2/2. Functionally, thiolesterase that catalyzes the hydrolysis of S-D-lactoyl-glutathione to form glutathione and D-lactic acid. The polypeptide is Hydroxyacylglutathione hydrolase (Escherichia coli O6:K15:H31 (strain 536 / UPEC)).